The chain runs to 196 residues: Cytochrome c biogenesis ATP-binding export protein CcmA (196 aa).

In terms of domain architecture, ABC transporter spans 2–195; that stretch reads LSFHQLKFNI…HIKSAQILQL (194 aa). 34 to 41 contributes to the ATP binding site; it reads GANGCGKT.

It belongs to the ABC transporter superfamily. CcmA exporter (TC 3.A.1.107) family. In terms of assembly, the complex is composed of two ATP-binding proteins (CcmA) and two transmembrane proteins (CcmB).

It is found in the cell inner membrane. The enzyme catalyses heme b(in) + ATP + H2O = heme b(out) + ADP + phosphate + H(+). Part of the ABC transporter complex CcmAB involved in the biogenesis of c-type cytochromes; once thought to export heme, this seems not to be the case, but its exact role is uncertain. Responsible for energy coupling to the transport system. The protein is Cytochrome c biogenesis ATP-binding export protein CcmA of Rickettsia bellii (strain RML369-C).